Reading from the N-terminus, the 74-residue chain is O-conotoxin GeXXXIA (74 aa).

The N-terminal stretch at methionine 1 to alanine 22 is a signal peptide. Positions valine 23–arginine 33 are excised as a propeptide.

It belongs to the conotoxin O1 superfamily. Homodimer; disulfide-linked. May contain 2 intrachain disulfide bonds and probably one interchain disulfide bond forming the homodimer. In terms of processing, the disulfide pairing is not important for activity towards the different nAChR subtypes, since this peptide without disulfide bond or with different disulfide bonds shows the same activity. As to expression, expressed by the venom duct.

The protein resides in the secreted. Functionally, the activity of this natural homodimer has not been tested due to low abundance. The synthetic linear peptide has been refolded, giving 4 different monomeric isomers (m1 to m4) with 2 disulfide bonds each. All isomers potently inhibit rat alpha-1-beta-1-delta-epsilon/CHRNA1-CHRNB1-CHRND-CHRNE and human alpha-9-alpha-10/CHRNA9-CHRNA10 nicotinic acetylcholine receptors (nAChR). In addition, they show a modest inhibition at human alpha-3-beta-2/CHRNA3-CHRNB2, alpha-3-beta-4/CHRNA3-CHRNB4, alpha-7/CHRNA7, and alpha-4-beta-4/CHRNA4-CHRNB4. The synthetic monomer peptide without disulfide bonds shows a potent activity on alpha-9-alpha-10/CHRNA9 and CHRNA10 (IC(50)=16.2 nM). This linear peptide does not act as a competitive antagonist, or as a channel pore blocker of nAChR. This chain is O-conotoxin GeXXXIA, found in Conus generalis (General cone).